Reading from the N-terminus, the 378-residue chain is Putative glutamate--cysteine ligase 2 (378 aa).

The protein belongs to the glutamate--cysteine ligase type 2 family. YbdK subfamily.

It catalyses the reaction L-cysteine + L-glutamate + ATP = gamma-L-glutamyl-L-cysteine + ADP + phosphate + H(+). ATP-dependent carboxylate-amine ligase which exhibits weak glutamate--cysteine ligase activity. The protein is Putative glutamate--cysteine ligase 2 of Jannaschia sp. (strain CCS1).